The chain runs to 1375 residues: DNA-directed RNA polymerase subunit beta' (1375 aa).

A unknown region spans residues Met-1–Arg-158. The segment at Lys-159–Ile-1353 is DNA-directed RNA polymerase subunit beta'. Residues Cys-219, Cys-221, Cys-233, and Cys-236 each contribute to the Zn(2+) site. The Mg(2+) site is built by Asp-607, Asp-609, and Asp-611.

This sequence belongs to the RNA polymerase beta' chain family. The RNAP catalytic core consists of 2 alpha, 1 beta, 1 beta' and 1 omega subunit. When a sigma factor is associated with the core the holoenzyme is formed, which can initiate transcription. Mg(2+) serves as cofactor. The cofactor is Zn(2+).

The enzyme catalyses RNA(n) + a ribonucleoside 5'-triphosphate = RNA(n+1) + diphosphate. Functionally, DNA-dependent RNA polymerase catalyzes the transcription of DNA into RNA using the four ribonucleoside triphosphates as substrates. The chain is DNA-directed RNA polymerase subunit beta' from Acholeplasma laidlawii (strain PG-8A).